A 337-amino-acid chain; its full sequence is Heme A synthase (337 aa).

Transmembrane regions (helical) follow at residues 6–26, 87–107, 119–139, 154–174, and 192–212; these read ITKWLCISCIMVIATIVIGGI, FIHRLLGRITALIYIVPLIYF, LPYIIALWLFCVQGFMGWYMV, LAFHLIIAVIIYHILFYQLIK, and LIFSGIAITVVYVQIFLGALV. H256 serves as a coordination point for heme. 3 consecutive transmembrane segments (helical) span residues 258 to 278, 285 to 305, and 308 to 328; these read LGGYSVFLVVVVLIICLLKIE, IAYFLMIALLMQVSTGIITLL, and VPIIIASIHQLFAVILLSIII. H316 is a binding site for heme.

This sequence belongs to the COX15/CtaA family. Type 2 subfamily. In terms of assembly, interacts with CtaB. The cofactor is heme b.

It localises to the cell membrane. The enzyme catalyses Fe(II)-heme o + 2 A + H2O = Fe(II)-heme a + 2 AH2. It participates in porphyrin-containing compound metabolism; heme A biosynthesis; heme A from heme O: step 1/1. Functionally, catalyzes the conversion of heme O to heme A by two successive hydroxylations of the methyl group at C8. The first hydroxylation forms heme I, the second hydroxylation results in an unstable dihydroxymethyl group, which spontaneously dehydrates, resulting in the formyl group of heme A. The protein is Heme A synthase of Rickettsia massiliae (strain Mtu5).